The following is a 173-amino-acid chain: Translation initiation factor IF-3 (173 aa).

This sequence belongs to the IF-3 family. As to quaternary structure, monomer.

It localises to the cytoplasm. Functionally, IF-3 binds to the 30S ribosomal subunit and shifts the equilibrium between 70S ribosomes and their 50S and 30S subunits in favor of the free subunits, thus enhancing the availability of 30S subunits on which protein synthesis initiation begins. The protein is Translation initiation factor IF-3 of Methylorubrum extorquens (strain CM4 / NCIMB 13688) (Methylobacterium extorquens).